The primary structure comprises 445 residues: Alkylglycerol monooxygenase (445 aa).

2 consecutive transmembrane segments (helical) span residues 43–63 (ATPF…ILKG) and 111–131 (WDSP…YYWF). A Fatty acid hydroxylase domain is found at 120–249 (AFLGVDFGYY…LIIWDKIFGT (130 aa)). The Histidine box-1 signature appears at 132–136 (HRMAH). The Histidine box-2 motif lies at 145 to 149 (HQTHH). Residues 221 to 225 (HRVHH) carry the Histidine box-3 motif. The next 3 helical transmembrane spans lie at 334–354 (LLKI…EETF), 363–383 (VTLL…GFLL), and 413–433 (VPSL…FWGV).

Belongs to the sterol desaturase family. TMEM195 subfamily. Fe cation serves as cofactor.

It localises to the endoplasmic reticulum membrane. The catalysed reaction is 1-O-(1,2-saturated-alkyl)-sn-glycerol + (6R)-L-erythro-5,6,7,8-tetrahydrobiopterin + O2 = a 1-(1-hydroxyalkyl)-sn-glycerol + (6R)-L-erythro-6,7-dihydrobiopterin + H2O. Glyceryl-ether monooxygenase that cleaves the O-alkyl bond of ether lipids. Ether lipids are essential components of brain membranes. This chain is Alkylglycerol monooxygenase (AGMO), found in Homo sapiens (Human).